Here is a 58-residue protein sequence, read N- to C-terminus: Ribosome modulation factor (58 aa).

Positions 1 to 28 (MKRQKRDRFERAHTQGFKAGLHGRSKDN) are disordered.

This sequence belongs to the ribosome modulation factor family.

It is found in the cytoplasm. Functionally, during stationary phase, converts 70S ribosomes to an inactive dimeric form (100S ribosomes). The sequence is that of Ribosome modulation factor from Idiomarina loihiensis (strain ATCC BAA-735 / DSM 15497 / L2-TR).